A 100-amino-acid chain; its full sequence is MAKKSMIAREVKRKKLVKKYAAKRKSLLDEFNAAKDPMERLEIHRKIQGLPRNSAPNRVRNRCWATGKPRGVYRDFGLCRNQLRQRAHNGELPGLVKSSW.

It belongs to the universal ribosomal protein uS14 family. In terms of assembly, part of the 30S ribosomal subunit. Contacts proteins S3 and S10.

In terms of biological role, binds 16S rRNA, required for the assembly of 30S particles and may also be responsible for determining the conformation of the 16S rRNA at the A site. This is Small ribosomal subunit protein uS14 from Prochlorococcus marinus (strain MIT 9301).